Consider the following 165-residue polypeptide: MPPKFDPNEIKVVYLRCTGGEVGATSALAPKIGPLGLSPKKVGDDIAKATGDWKGLRITVKLTIQNRQAQIEVVPSASALIIKALKEPPRDRKKQKNIKHSGNITFDEIVNIARQMRHRSLARELSGTIKEILGTAQSVGCNVDNRHPHDIIDDINNGVVECPAS.

S38 is subject to Phosphoserine. A Glycyl lysine isopeptide (Lys-Gly) (interchain with G-Cter in SUMO2) cross-link involves residue K40. Residue K48 forms a Glycyl lysine isopeptide (Lys-Gly) (interchain with G-Cter in ubiquitin) linkage. Residue K54 is modified to N6-acetyllysine. A Glycyl lysine isopeptide (Lys-Gly) (interchain with G-Cter in ubiquitin) cross-link involves residue K83. S165 is subject to Phosphoserine.

The protein belongs to the universal ribosomal protein uL11 family. In terms of assembly, component of the large ribosomal subunit. Mature ribosomes consist of a small (40S) and a large (60S) subunit. The 40S subunit contains about 33 different proteins and 1 molecule of RNA (18S). The 60S subunit contains about 49 different proteins and 3 molecules of RNA (28S, 5.8S and 5S). Post-translationally, ubiquitinated at Lys-48 and Lys-83 by RNF14 and RNF25 in response to ribosome collisions (ribosome stalling).

It localises to the cytoplasm. Its function is as follows. Component of the large ribosomal subunit. The ribosome is a large ribonucleoprotein complex responsible for the synthesis of proteins in the cell. Binds directly to 26S ribosomal RNA. The polypeptide is Large ribosomal subunit protein uL11 (RPL12) (Chinchilla lanigera (Long-tailed chinchilla)).